We begin with the raw amino-acid sequence, 343 residues long: Small ribosomal subunit biogenesis GTPase RsgA (343 aa).

In terms of domain architecture, CP-type G spans 116-275; it reads RGQLKPVAAN…LIDSPGIREF (160 aa). GTP-binding positions include 163–166 and 217–225; these read NKAD and GQSGVGKSS. Residues Cys299, Cys304, His306, and Cys312 each contribute to the Zn(2+) site.

The protein belongs to the TRAFAC class YlqF/YawG GTPase family. RsgA subfamily. As to quaternary structure, monomer. Associates with 30S ribosomal subunit, binds 16S rRNA. It depends on Zn(2+) as a cofactor.

Its subcellular location is the cytoplasm. In terms of biological role, one of several proteins that assist in the late maturation steps of the functional core of the 30S ribosomal subunit. Helps release RbfA from mature subunits. May play a role in the assembly of ribosomal proteins into the subunit. Circularly permuted GTPase that catalyzes slow GTP hydrolysis, GTPase activity is stimulated by the 30S ribosomal subunit. The protein is Small ribosomal subunit biogenesis GTPase RsgA of Pseudomonas syringae pv. tomato (strain ATCC BAA-871 / DC3000).